The following is a 117-amino-acid chain: DNA-directed RNA polymerase subunit omega (117 aa).

It belongs to the RNA polymerase subunit omega family. In terms of assembly, the RNAP catalytic core consists of 2 alpha, 1 beta, 1 beta' and 1 omega subunit. When a sigma factor is associated with the core the holoenzyme is formed, which can initiate transcription.

It carries out the reaction RNA(n) + a ribonucleoside 5'-triphosphate = RNA(n+1) + diphosphate. Functionally, promotes RNA polymerase assembly. Latches the N- and C-terminal regions of the beta' subunit thereby facilitating its interaction with the beta and alpha subunits. The sequence is that of DNA-directed RNA polymerase subunit omega from Roseobacter denitrificans (strain ATCC 33942 / OCh 114) (Erythrobacter sp. (strain OCh 114)).